Reading from the N-terminus, the 275-residue chain is Elongation factor Ts (275 aa).

An involved in Mg(2+) ion dislocation from EF-Tu region spans residues 76–79 (TDFV).

This sequence belongs to the EF-Ts family.

It is found in the cytoplasm. Associates with the EF-Tu.GDP complex and induces the exchange of GDP to GTP. It remains bound to the aminoacyl-tRNA.EF-Tu.GTP complex up to the GTP hydrolysis stage on the ribosome. The chain is Elongation factor Ts from Corynebacterium glutamicum (strain R).